The sequence spans 316 residues: Glutathione synthetase (316 aa).

Residues 124-311 (NEKLAALLFP…IAGLLFDAIE (188 aa)) form the ATP-grasp domain. 151-208 (FVLAHGQAVLKPLDGMGGRSIFRSGTGDPNLNVILETLTDGGRKLTLAQRFIPDITAG) is a binding site for ATP. Mg(2+)-binding residues include E282 and N284.

This sequence belongs to the prokaryotic GSH synthase family. The cofactor is Mg(2+). It depends on Mn(2+) as a cofactor.

It catalyses the reaction gamma-L-glutamyl-L-cysteine + glycine + ATP = glutathione + ADP + phosphate + H(+). It functions in the pathway sulfur metabolism; glutathione biosynthesis; glutathione from L-cysteine and L-glutamate: step 2/2. In Xanthomonas campestris pv. campestris (strain ATCC 33913 / DSM 3586 / NCPPB 528 / LMG 568 / P 25), this protein is Glutathione synthetase.